We begin with the raw amino-acid sequence, 277 residues long: Ribosomal protein L11 methyltransferase (277 aa).

Thr130, Gly151, Asp172, and Asn213 together coordinate S-adenosyl-L-methionine.

The protein belongs to the methyltransferase superfamily. PrmA family.

The protein localises to the cytoplasm. It carries out the reaction L-lysyl-[protein] + 3 S-adenosyl-L-methionine = N(6),N(6),N(6)-trimethyl-L-lysyl-[protein] + 3 S-adenosyl-L-homocysteine + 3 H(+). Methylates ribosomal protein L11. This chain is Ribosomal protein L11 methyltransferase, found in Campylobacter concisus (strain 13826).